Reading from the N-terminus, the 412-residue chain is Putative phosphate permease PF1020 (412 aa).

A run of 10 helical transmembrane segments spans residues 7-27 (MLADPILLITILLGFAMAWAI), 50-70 (AVIIAGVLEFMGAYFFGKTVT), 88-108 (VLIFGSIAALIGATIWLVIAT), 119-139 (SIIGGIVGYGIVYGGMSIVNW), 143-163 (IKVVLSWILSPIVGAIFAYLV), 187-207 (FWIGLAFVVIGTMFYIKVLHG), 213-233 (GFLKYGMPAGILTFIVVSLIL), 298-318 (WILALGGLGIAIGVATYGYKV), 335-355 (FTIDFSAATVVLIASWLGMPI), and 384-404 (DIIISWFVTVPAAGVIAGIIF).

Belongs to the inorganic phosphate transporter (PiT) (TC 2.A.20) family.

Its subcellular location is the cell membrane. Its function is as follows. Potential transporter for phosphate. This is Putative phosphate permease PF1020 from Pyrococcus furiosus (strain ATCC 43587 / DSM 3638 / JCM 8422 / Vc1).